Reading from the N-terminus, the 119-residue chain is Enhancer of yellow 2 transcription factor (119 aa).

The tract at residues 93–119 is disordered; that stretch reads LTENETEGTDNHDDDEDDEDENGTEDN. Residues 96–119 show a composition bias toward acidic residues; that stretch reads NETEGTDNHDDDEDDEDENGTEDN.

Belongs to the ENY2 family. Component of the nuclear pore complex (NPC)-associated AMEX complex (anchoring and mRNA export complex), composed of at least e(y)2 and xmas-2. Component of the SAGA transcription coactivator-HAT complexes, at least composed of Ada2b, e(y)2, Pcaf/Gcn5, Taf10 and Nipped-A/Trrap. Within the SAGA complex, e(y)2, Sgf11, and not/nonstop form an additional subcomplex of SAGA called the DUB module (deubiquitination module). Component of the THO complex, composed of at least e(y)2, HPR1, THO2, THOC5, THOC6 and THOC7. Interacts with e(y)1. Interacts with su(Hw) (via zinc fingers). Interacts with xmas-2; required for localization to the nuclear periphery. Interacts with the nuclear pore complex (NPC).

Its subcellular location is the nucleus. The protein localises to the nucleoplasm. The protein resides in the cytoplasm. Involved in mRNA export coupled transcription activation by association with both the AMEX and the SAGA complexes. The SAGA complex is a multiprotein complex that activates transcription by remodeling chromatin and mediating histone acetylation and deubiquitination. Within the SAGA complex, participates in a subcomplex that specifically deubiquitinates histone H2B. The SAGA complex is recruited to specific gene promoters by activators, where it is required for transcription. Required for nuclear receptor-mediated transactivation. Involved in transcription elongation by recruiting the THO complex onto nascent mRNA. The AMEX complex functions in docking export-competent ribonucleoprotein particles (mRNPs) to the nuclear entrance of the nuclear pore complex (nuclear basket). AMEX participates in mRNA export and accurate chromatin positioning in the nucleus by tethering genes to the nuclear periphery. The sequence is that of Enhancer of yellow 2 transcription factor from Drosophila willistoni (Fruit fly).